The sequence spans 409 residues: Pyrophosphate--fructose 6-phosphate 1-phosphotransferase (409 aa).

Gly14 contacts diphosphate. Asp123 contributes to the Mg(2+) binding site. Residues 151 to 153 (TVD), 196 to 198 (MGR), Glu268, and 325 to 328 (YFAR) each bind substrate. Asp153 functions as the Proton acceptor in the catalytic mechanism.

The protein belongs to the phosphofructokinase type A (PFKA) family. PPi-dependent PFK group II subfamily. Clade 'P' sub-subfamily. As to quaternary structure, homodimer. Mg(2+) is required as a cofactor.

It is found in the cytoplasm. It carries out the reaction beta-D-fructose 6-phosphate + diphosphate = beta-D-fructose 1,6-bisphosphate + phosphate + H(+). The protein operates within carbohydrate degradation; glycolysis; D-glyceraldehyde 3-phosphate and glycerone phosphate from D-glucose: step 3/4. With respect to regulation, non-allosteric. In terms of biological role, catalyzes the phosphorylation of D-fructose 6-phosphate, the first committing step of glycolysis. Uses inorganic phosphate (PPi) as phosphoryl donor instead of ATP like common ATP-dependent phosphofructokinases (ATP-PFKs), which renders the reaction reversible, and can thus function both in glycolysis and gluconeogenesis. Consistently, PPi-PFK can replace the enzymes of both the forward (ATP-PFK) and reverse (fructose-bisphosphatase (FBPase)) reactions. In Methylomonas methanica, this protein is Pyrophosphate--fructose 6-phosphate 1-phosphotransferase.